We begin with the raw amino-acid sequence, 209 residues long: N-(5'-phosphoribosyl)anthranilate isomerase (209 aa).

The protein belongs to the TrpF family.

It carries out the reaction N-(5-phospho-beta-D-ribosyl)anthranilate = 1-(2-carboxyphenylamino)-1-deoxy-D-ribulose 5-phosphate. It functions in the pathway amino-acid biosynthesis; L-tryptophan biosynthesis; L-tryptophan from chorismate: step 3/5. This Pyrobaculum islandicum (strain DSM 4184 / JCM 9189 / GEO3) protein is N-(5'-phosphoribosyl)anthranilate isomerase.